Consider the following 624-residue polypeptide: Glutamine--fructose-6-phosphate aminotransferase [isomerizing] (624 aa).

C2 (nucleophile; for GATase activity) is an active-site residue. Residues 2-226 enclose the Glutamine amidotransferase type-2 domain; sequence CGIVGYVGQQ…QDQAVVLTAD (225 aa). SIS domains follow at residues 297–436 and 469–614; these read SDQE…ARGT and LAQR…VDKP. The For Fru-6P isomerization activity role is filled by K619.

Homodimer.

It localises to the cytoplasm. It catalyses the reaction D-fructose 6-phosphate + L-glutamine = D-glucosamine 6-phosphate + L-glutamate. In terms of biological role, catalyzes the first step in hexosamine metabolism, converting fructose-6P into glucosamine-6P using glutamine as a nitrogen source. The sequence is that of Glutamine--fructose-6-phosphate aminotransferase [isomerizing] from Mycolicibacterium paratuberculosis (strain ATCC BAA-968 / K-10) (Mycobacterium paratuberculosis).